Consider the following 329-residue polypeptide: NADH-quinone oxidoreductase subunit H (329 aa).

The next 9 helical transmembrane spans lie at L9–I29, G42–F62, F75–I95, I117–G137, I154–V174, G188–A208, L238–I258, W269–W291, and W309–I329.

Belongs to the complex I subunit 1 family. In terms of assembly, NDH-1 is composed of 14 different subunits. Subunits NuoA, H, J, K, L, M, N constitute the membrane sector of the complex.

The protein localises to the cell inner membrane. It catalyses the reaction a quinone + NADH + 5 H(+)(in) = a quinol + NAD(+) + 4 H(+)(out). NDH-1 shuttles electrons from NADH, via FMN and iron-sulfur (Fe-S) centers, to quinones in the respiratory chain. The immediate electron acceptor for the enzyme in this species is believed to be ubiquinone. Couples the redox reaction to proton translocation (for every two electrons transferred, four hydrogen ions are translocated across the cytoplasmic membrane), and thus conserves the redox energy in a proton gradient. This subunit may bind ubiquinone. The polypeptide is NADH-quinone oxidoreductase subunit H (Helicobacter pylori (strain ATCC 700392 / 26695) (Campylobacter pylori)).